The following is a 218-amino-acid chain: 3-dehydroquinate dehydratase (218 aa).

Residues 29-31 (EFR) and Arg56 each bind 3-dehydroquinate. His116 serves as the catalytic Proton donor/acceptor. The active-site Schiff-base intermediate with substrate is Lys142. Residues Arg180, Ser200, and Gln204 each coordinate 3-dehydroquinate.

Belongs to the type-I 3-dehydroquinase family. In terms of assembly, homodimer.

It catalyses the reaction 3-dehydroquinate = 3-dehydroshikimate + H2O. The protein operates within metabolic intermediate biosynthesis; chorismate biosynthesis; chorismate from D-erythrose 4-phosphate and phosphoenolpyruvate: step 3/7. In terms of biological role, involved in the third step of the chorismate pathway, which leads to the biosynthesis of aromatic amino acids. Catalyzes the cis-dehydration of 3-dehydroquinate (DHQ) and introduces the first double bond of the aromatic ring to yield 3-dehydroshikimate. This Methanococcus maripaludis (strain C5 / ATCC BAA-1333) protein is 3-dehydroquinate dehydratase.